Reading from the N-terminus, the 231-residue chain is 2-C-methyl-D-erythritol 4-phosphate cytidylyltransferase (231 aa).

This sequence belongs to the IspD/TarI cytidylyltransferase family. IspD subfamily.

The enzyme catalyses 2-C-methyl-D-erythritol 4-phosphate + CTP + H(+) = 4-CDP-2-C-methyl-D-erythritol + diphosphate. It participates in isoprenoid biosynthesis; isopentenyl diphosphate biosynthesis via DXP pathway; isopentenyl diphosphate from 1-deoxy-D-xylulose 5-phosphate: step 2/6. In terms of biological role, catalyzes the formation of 4-diphosphocytidyl-2-C-methyl-D-erythritol from CTP and 2-C-methyl-D-erythritol 4-phosphate (MEP). In Bacillus licheniformis (strain ATCC 14580 / DSM 13 / JCM 2505 / CCUG 7422 / NBRC 12200 / NCIMB 9375 / NCTC 10341 / NRRL NRS-1264 / Gibson 46), this protein is 2-C-methyl-D-erythritol 4-phosphate cytidylyltransferase.